Here is a 225-residue protein sequence, read N- to C-terminus: Urease accessory protein UreF (225 aa).

The protein belongs to the UreF family. UreD, UreF and UreG form a complex that acts as a GTP-hydrolysis-dependent molecular chaperone, activating the urease apoprotein by helping to assemble the nickel containing metallocenter of UreC. The UreE protein probably delivers the nickel.

The protein localises to the cytoplasm. Required for maturation of urease via the functional incorporation of the urease nickel metallocenter. This chain is Urease accessory protein UreF, found in Picosynechococcus sp. (strain ATCC 27264 / PCC 7002 / PR-6) (Agmenellum quadruplicatum).